A 673-amino-acid polypeptide reads, in one-letter code: Centrosomal protein kizuna (673 aa).

5 disordered regions span residues 175–207 (TEHK…TDSC), 255–413 (GSNT…ALKL), 432–480 (QTLS…NSVK), 494–516 (ECGR…ILND), and 613–673 (SEAS…DFYD). 2 stretches are compositionally biased toward polar residues: residues 196–207 (QTAQSSNVTDSC) and 255–266 (GSNTRHGKSNLS). Composition is skewed to basic and acidic residues over residues 267–293 (EGKK…DLKC) and 303–316 (ILTR…EKRA). Serine 317 and serine 321 each carry phosphoserine. Basic and acidic residues predominate over residues 331–357 (SENKWSQEKHSPWEGVSDHLAHREPKS). A Phosphothreonine; by PLK1 modification is found at threonine 379. Residues 471 to 480 (TLKEHDNSVK) show a composition bias toward basic and acidic residues. Composition is skewed to low complexity over residues 503–512 (SSESSCSLPS) and 613–625 (SEAS…GSPL). Residues serine 647, serine 650, and serine 652 each carry the phosphoserine modification.

The protein belongs to the kizuna family. Interacts with AKAP9, CEP72, ODF2, PCNT and TUBGCP2. Post-translationally, phosphorylation at Thr-379 by PLK1 is not needed for centrosomal localization or pericentriolar material expansion but is indispensable for spindle-pole stabilization.

The protein resides in the cytoplasm. It is found in the cytoskeleton. Its subcellular location is the microtubule organizing center. It localises to the centrosome. The protein localises to the cilium basal body. In terms of biological role, centrosomal protein required for establishing a robust mitotic centrosome architecture that can endure the forces that converge on the centrosomes during spindle formation. Required for stabilizing the expanded pericentriolar material around the centriole. The protein is Centrosomal protein kizuna (KIZ) of Homo sapiens (Human).